A 111-amino-acid chain; its full sequence is Cytochrome c3, 26 kDa (111 aa).

16 residues coordinate heme c: histidine 30, histidine 33, cysteine 38, cysteine 41, histidine 42, histidine 43, cysteine 54, cysteine 59, histidine 60, histidine 77, cysteine 86, cysteine 89, histidine 90, cysteine 105, cysteine 108, and histidine 109.

As to quaternary structure, homodimer. Heme c is required as a cofactor.

It is found in the periplasm. In terms of biological role, participates in sulfate respiration coupled with phosphorylation by transferring electrons from the enzyme dehydrogenase to ferredoxin. This Desulfomicrobium norvegicum (strain DSM 1741 / NCIMB 8310) (Desulfovibrio baculatus (strain Norway 4)) protein is Cytochrome c3, 26 kDa.